Consider the following 951-residue polypeptide: Serine/threonine-protein kinase ATG1 (951 aa).

Residues 22–327 (FTINEEIGKG…FPEYFAHPVV (306 aa)) enclose the Protein kinase domain. Residues 28–36 (IGKGSFATV) and Lys-51 each bind ATP. Asp-165 (proton acceptor) is an active-site residue. Disordered regions lie at residues 343–375 (IITPSRSPEASVARHPSLRERQRENPTPKPVET), 387–458 (EQAP…YDEQ), 514–573 (HIPK…SSPS), and 924–951 (HQSMPPPSSPRHSHSGGTTPTIANTPPH). 2 stretches are compositionally biased toward basic and acidic residues: residues 359-368 (SLRERQRENP) and 432-442 (PRQRDRTERHY). 2 stretches are compositionally biased toward polar residues: residues 547–573 (AQGNTRPDTSSARNSYGSYGKTGSSPS) and 939–951 (GGTTPTIANTPPH).

Belongs to the protein kinase superfamily. Ser/Thr protein kinase family. APG1/unc-51/ULK1 subfamily. In terms of assembly, homodimer. Forms a ternary complex with ATG13 and ATG17.

The protein localises to the cytoplasm. It is found in the preautophagosomal structure membrane. The catalysed reaction is L-seryl-[protein] + ATP = O-phospho-L-seryl-[protein] + ADP + H(+). It catalyses the reaction L-threonyl-[protein] + ATP = O-phospho-L-threonyl-[protein] + ADP + H(+). Functionally, serine/threonine protein kinase involved in the cytoplasm to vacuole transport (Cvt) and found to be essential in autophagy, where it is required for the formation of autophagosomes. Involved in the clearance of protein aggregates which cannot be efficiently cleared by the proteasome. Required for selective autophagic degradation of the nucleus (nucleophagy) as well as for mitophagy which contributes to regulate mitochondrial quantity and quality by eliminating the mitochondria to a basal level to fulfill cellular energy requirements and preventing excess ROS production. Also involved in endoplasmic reticulum-specific autophagic process, in selective removal of ER-associated degradation (ERAD) substrates. Plays a key role in ATG9 and ATG23 cycling through the pre-autophagosomal structure and is necessary to promote ATG18 binding to ATG9 through phosphorylation of ATG9. Catalyzes phosphorylation of ATG4, decreasing the interaction between ATG4 and ATG8 and impairing deconjugation of PE-conjugated forms of ATG8. In Sclerotinia sclerotiorum (strain ATCC 18683 / 1980 / Ss-1) (White mold), this protein is Serine/threonine-protein kinase ATG1.